The chain runs to 124 residues: Putative melanoma-associated antigen 5P (124 aa).

The segment covering 1 to 14 (MSLEQKSQHCKPEE) has biased composition (basic and acidic residues). Disordered stretches follow at residues 1-69 (MSLE…QGAS) and 82-103 (QSIK…DPES). The MAGE domain maps to 3–124 (LEQKSQHCKP…DLIHFLLLKY (122 aa)). Polar residues-rich tracts occupy residues 30–44 (AATT…SSSP) and 82–100 (QSIK…TSPD).

Expressed in many tumors of several types, such as melanoma, head and neck squamous cell carcinoma, lung carcinoma and breast carcinoma, but not in normal tissues except for testes.

Its function is as follows. May negatively regulates apoptosis. The sequence is that of Putative melanoma-associated antigen 5P from Homo sapiens (Human).